We begin with the raw amino-acid sequence, 194 residues long: GTP cyclohydrolase-2 (194 aa).

GTP is bound at residue 47–51 (RVHSE). Zn(2+) is bound by residues Cys-52, Cys-63, and Cys-65. Residues Gln-68, 90 to 92 (EGR), and Thr-112 each bind GTP. The Proton acceptor role is filled by Asp-124. Residue Arg-126 is the Nucleophile of the active site. Thr-147 and Lys-152 together coordinate GTP.

It belongs to the GTP cyclohydrolase II family. In terms of assembly, homodimer. It depends on Zn(2+) as a cofactor.

The catalysed reaction is GTP + 4 H2O = 2,5-diamino-6-hydroxy-4-(5-phosphoribosylamino)-pyrimidine + formate + 2 phosphate + 3 H(+). It participates in cofactor biosynthesis; riboflavin biosynthesis; 5-amino-6-(D-ribitylamino)uracil from GTP: step 1/4. Functionally, catalyzes the conversion of GTP to 2,5-diamino-6-ribosylamino-4(3H)-pyrimidinone 5'-phosphate (DARP), formate and pyrophosphate. This Buchnera aphidicola subsp. Acyrthosiphon pisum (strain APS) (Acyrthosiphon pisum symbiotic bacterium) protein is GTP cyclohydrolase-2.